Consider the following 431-residue polypeptide: Enolase (431 aa).

(2R)-2-phosphoglycerate is bound at residue Q167. E209 functions as the Proton donor in the catalytic mechanism. Positions 246, 289, and 316 each coordinate Mg(2+). (2R)-2-phosphoglycerate-binding residues include K341, R370, S371, and K392. K341 serves as the catalytic Proton acceptor.

The protein belongs to the enolase family. Component of the RNA degradosome, a multiprotein complex involved in RNA processing and mRNA degradation. The cofactor is Mg(2+).

The protein resides in the cytoplasm. It is found in the secreted. Its subcellular location is the cell surface. It carries out the reaction (2R)-2-phosphoglycerate = phosphoenolpyruvate + H2O. It participates in carbohydrate degradation; glycolysis; pyruvate from D-glyceraldehyde 3-phosphate: step 4/5. Its function is as follows. Catalyzes the reversible conversion of 2-phosphoglycerate (2-PG) into phosphoenolpyruvate (PEP). It is essential for the degradation of carbohydrates via glycolysis. The polypeptide is Enolase (Shewanella baltica (strain OS155 / ATCC BAA-1091)).